The primary structure comprises 53 residues: Small, acid-soluble spore protein K (53 aa).

The disordered stretch occupies residues 1–53 (MGRQAEFWSESKNNSKIDGQPKAKARFASKRPNGTINTHPQERMRAANQQEEE).

The protein belongs to the SspK family.

The protein resides in the spore core. This chain is Small, acid-soluble spore protein K, found in Bacillus cytotoxicus (strain DSM 22905 / CIP 110041 / 391-98 / NVH 391-98).